The chain runs to 605 residues: Capsid scaffolding protein (605 aa).

Catalysis depends on charge relay system residues His48, Ser116, and His139. The disordered stretch occupies residues Ala235–Gly274. An interaction with pAP region spans residues Gln281–Asp300. 2 disordered regions span residues Asp403–Glu431 and Pro489–Ser588. Residues Arg410–Arg416 carry the Nuclear localization signal motif. Positions Ala568–Pro579 are enriched in polar residues. The tract at residues Lys585–Ala605 is interaction with major capsid protein.

This sequence belongs to the herpesviridae capsid scaffolding protein family. In terms of assembly, homomultimer. Interacts with major capsid protein. Exists in a monomer-dimer equilibrium with the dimer being the active species. Capsid scaffolding protein is cleaved by assemblin after formation of the spherical procapsid. As a result, the capsid obtains its mature, icosahedral shape. Cleavages occur at two or more sites: release (R-site) and maturation (M-site).

Its subcellular location is the host cytoplasm. It localises to the host nucleus. It carries out the reaction Cleaves -Ala-|-Ser- and -Ala-|-Ala- bonds in the scaffold protein.. Acts as a scaffold protein by binding major capsid protein in the cytoplasm, inducing the nuclear localization of both proteins. Multimerizes in the nucleus such as major capsid protein forms the icosahedral T=16 capsid. Autocatalytic cleavage releases the assembly protein, and subsequently abolishes interaction with major capsid protein. Cleavages products are evicted from the capsid before or during DNA packaging. Functionally, protease that plays an essential role in virion assembly within the nucleus. Catalyzes the cleavage of the assembly protein after formation of the spherical procapsid. By that cleavage, the capsid matures and gains its icosahedral shape. The cleavage sites seem to include -Ala-Ser-, -Ala-Ala-, as well as Ala-Thr bonds. Assemblin and cleavages products are evicted from the capsid before or during DNA packaging. In terms of biological role, plays a major role in capsid assembly. Acts as a scaffold protein by binding major capsid protein. Multimerizes in the nucleus such as major capsid protein forms the icosahedral T=16 capsid. Cleaved by assemblin after capsid completion. The cleavages products are evicted from the capsid before or during DNA packaging. The sequence is that of Capsid scaffolding protein from Homo sapiens (Human).